Here is a 90-residue protein sequence, read N- to C-terminus: Probable Fe(2+)-trafficking protein (90 aa).

It belongs to the Fe(2+)-trafficking protein family.

Could be a mediator in iron transactions between iron acquisition and iron-requiring processes, such as synthesis and/or repair of Fe-S clusters in biosynthetic enzymes. This chain is Probable Fe(2+)-trafficking protein, found in Pseudomonas syringae pv. tomato (strain ATCC BAA-871 / DC3000).